We begin with the raw amino-acid sequence, 386 residues long: MHLHEYQAKDLLASYDVPIPPYWVVSSEEEGELLITKSGLDSAVVKVQVHAGGRGKHGGVIVAKSSAGILQAVAKLLGMHFTSNQTADGFLPVEKVLISPLVAIQREYYVAVIMDRKHRCPVLMLSKAGGMDIEEVAHSSPEQILTLPLTSYGHIYSYQLRQATKFMEWEGEVMHQGVQLIKKLAKCFYENDVSLLEINPLVLTLEGELLVLDSKITIDDNALYRHPNLEVLYDPSQENVRDVLAKQIGLSYIALSGNIGCIVNGAGLAMSTLDILKLHGGNAANFLDVGGGASQKQIQEAVSLVLSDESVKVLFINIFGGIMDCSVVASGLVAVMETRDQVVPTVIRLEGTNVELGKEIVQQSGIPCQFVSSMEEGARRAVELSM.

In terms of domain architecture, ATP-grasp spans 9–244 (KDLLASYDVP…PSQENVRDVL (236 aa)). Residues K46, 53 to 55 (GRG), V102, and E107 contribute to the ATP site. Mg(2+) contacts are provided by N199 and D213. Residues N264 and 321–323 (GIM) contribute to the substrate site.

It belongs to the succinate/malate CoA ligase beta subunit family. As to quaternary structure, heterotetramer of two alpha and two beta subunits. Mg(2+) serves as cofactor.

The catalysed reaction is succinate + ATP + CoA = succinyl-CoA + ADP + phosphate. It carries out the reaction GTP + succinate + CoA = succinyl-CoA + GDP + phosphate. It participates in carbohydrate metabolism; tricarboxylic acid cycle; succinate from succinyl-CoA (ligase route): step 1/1. Functionally, succinyl-CoA synthetase functions in the citric acid cycle (TCA), coupling the hydrolysis of succinyl-CoA to the synthesis of either ATP or GTP and thus represents the only step of substrate-level phosphorylation in the TCA. The beta subunit provides nucleotide specificity of the enzyme and binds the substrate succinate, while the binding sites for coenzyme A and phosphate are found in the alpha subunit. This Chlamydia pneumoniae (Chlamydophila pneumoniae) protein is Succinate--CoA ligase [ADP-forming] subunit beta.